Here is a 443-residue protein sequence, read N- to C-terminus: Cobyrinate a,c-diamide synthase (443 aa).

Positions 248–433 constitute a GATase cobBQ-type domain; it reads KIAVAYDKAF…LHNHAVANPY (186 aa). The active-site Nucleophile is the C327.

It belongs to the CobB/CbiA family. The cofactor is Mg(2+).

The catalysed reaction is cob(II)yrinate + 2 L-glutamine + 2 ATP + 2 H2O = cob(II)yrinate a,c diamide + 2 L-glutamate + 2 ADP + 2 phosphate + 2 H(+). The enzyme catalyses Ni-sirohydrochlorin + 2 L-glutamine + 2 ATP + 2 H2O = Ni-sirohydrochlorin a,c-diamide + 2 L-glutamate + 2 ADP + 2 phosphate + 2 H(+). It participates in cofactor biosynthesis; adenosylcobalamin biosynthesis; cob(II)yrinate a,c-diamide from sirohydrochlorin (anaerobic route): step 10/10. Its function is as follows. Catalyzes the ATP-dependent amidation of the two carboxylate groups at positions a and c of cobyrinate, using either L-glutamine or ammonia as the nitrogen source. Involved in the biosynthesis of the unique nickel-containing tetrapyrrole coenzyme F430, the prosthetic group of methyl-coenzyme M reductase (MCR), which plays a key role in methanogenesis and anaerobic methane oxidation. Catalyzes the ATP-dependent amidation of the two carboxylate groups at positions a and c of Ni-sirohydrochlorin, using L-glutamine or ammonia as the nitrogen source. This Methanocaldococcus jannaschii (strain ATCC 43067 / DSM 2661 / JAL-1 / JCM 10045 / NBRC 100440) (Methanococcus jannaschii) protein is Cobyrinate a,c-diamide synthase.